A 331-amino-acid chain; its full sequence is MTKVYYEDAVKNNALEGKTVAVIGYGSQGHAHSQNLRDNGNNVIIGIREGKSAESARNDGFDVYSVSEAAEKADVIMILLPDETQGETYENEIKPNLKAGNALVFAHGFNIHFDVINPPSDVDVFLVAPKGPGHLVRRTFVEGGAVPSLFAIYQDATGNARDTALSYAKGIGATRAGVIETTFKEETETDLFGEQAVLCGGATHLIQAGFETLVEAGYQPELAYFEVLHEMKLIVDLMYEGGMEKMRHSISNTAEYGDYVSGPRVVTADTKKAMKEVLTDIQNGNFAKSFIDDNKNGFKEFHRMRKEQQGHQIEKVGAELREMMPFVKPQH.

The region spanning 2–181 is the KARI N-terminal Rossmann domain; it reads TKVYYEDAVK…GATRAGVIET (180 aa). NADP(+)-binding positions include 25–28, R48, S52, and 82–85; these read YGSQ and DETQ. H107 is an active-site residue. G133 contributes to the NADP(+) binding site. Residues 182–327 enclose the KARI C-terminal knotted domain; the sequence is TFKEETETDL…AELREMMPFV (146 aa). Mg(2+) contacts are provided by D190, E194, E226, and E230. S251 provides a ligand contact to substrate.

This sequence belongs to the ketol-acid reductoisomerase family. The cofactor is Mg(2+).

The enzyme catalyses (2R)-2,3-dihydroxy-3-methylbutanoate + NADP(+) = (2S)-2-acetolactate + NADPH + H(+). It catalyses the reaction (2R,3R)-2,3-dihydroxy-3-methylpentanoate + NADP(+) = (S)-2-ethyl-2-hydroxy-3-oxobutanoate + NADPH + H(+). Its pathway is amino-acid biosynthesis; L-isoleucine biosynthesis; L-isoleucine from 2-oxobutanoate: step 2/4. It functions in the pathway amino-acid biosynthesis; L-valine biosynthesis; L-valine from pyruvate: step 2/4. Functionally, involved in the biosynthesis of branched-chain amino acids (BCAA). Catalyzes an alkyl-migration followed by a ketol-acid reduction of (S)-2-acetolactate (S2AL) to yield (R)-2,3-dihydroxy-isovalerate. In the isomerase reaction, S2AL is rearranged via a Mg-dependent methyl migration to produce 3-hydroxy-3-methyl-2-ketobutyrate (HMKB). In the reductase reaction, this 2-ketoacid undergoes a metal-dependent reduction by NADPH to yield (R)-2,3-dihydroxy-isovalerate. The protein is Ketol-acid reductoisomerase (NADP(+)) of Listeria innocua serovar 6a (strain ATCC BAA-680 / CLIP 11262).